A 123-amino-acid chain; its full sequence is Integration host factor subunit alpha (123 aa).

Belongs to the bacterial histone-like protein family. In terms of assembly, heterodimer of an alpha and a beta chain.

This protein is one of the two subunits of integration host factor, a specific DNA-binding protein that functions in genetic recombination as well as in transcriptional and translational control. This is Integration host factor subunit alpha from Polaromonas naphthalenivorans (strain CJ2).